Reading from the N-terminus, the 426-residue chain is Cdc25-like protein phosphatase twine (426 aa).

Positions 1-27 (MASKRLMLDVEEEDDESGACGQENFDP) are disordered. The Rhodanese domain occupies 265-371 (SQGGYEIIDC…FFGLYSQLCQ (107 aa)). Cys-318 is an active-site residue.

This sequence belongs to the MPI phosphatase family. As to expression, expressed in developing male and female germ cells.

It catalyses the reaction O-phospho-L-tyrosyl-[protein] + H2O = L-tyrosyl-[protein] + phosphate. Its function is as follows. Required during meiosis. Regulates the transition from the extended G2 phase to the onset of the first meiotic division. The polypeptide is Cdc25-like protein phosphatase twine (twe) (Drosophila melanogaster (Fruit fly)).